The following is a 214-amino-acid chain: Cytochrome b (214 aa).

4 helical membrane passes run 31-51, 75-96, 111-131, and 176-196; these read FGSM…FLAI, WIMQ…YIHI, WLSG…GYVL, and FFAL…IHII. His-81 and His-95 together coordinate heme b. Heme b is bound by residues His-180 and His-194. His-199 is a binding site for a ubiquinone.

The protein belongs to the cytochrome b family. The cytochrome bc1 complex contains 3 respiratory subunits (MT-CYB, CYC1 and UQCRFS1), 2 core proteins (UQCRC1 and UQCRC2) and probably 6 low-molecular weight proteins. Heme b is required as a cofactor.

The protein localises to the mitochondrion inner membrane. Its function is as follows. Component of the ubiquinol-cytochrome c reductase complex (complex III or cytochrome b-c1 complex) that is part of the mitochondrial respiratory chain. The b-c1 complex mediates electron transfer from ubiquinol to cytochrome c. Contributes to the generation of a proton gradient across the mitochondrial membrane that is then used for ATP synthesis. The chain is Cytochrome b (MT-CYB) from Atractaspis micropholis (Mole viper).